The sequence spans 442 residues: Proline--tRNA ligase (442 aa).

It belongs to the class-II aminoacyl-tRNA synthetase family. ProS type 2 subfamily. As to quaternary structure, homodimer.

The protein localises to the cytoplasm. The enzyme catalyses tRNA(Pro) + L-proline + ATP = L-prolyl-tRNA(Pro) + AMP + diphosphate. Catalyzes the attachment of proline to tRNA(Pro) in a two-step reaction: proline is first activated by ATP to form Pro-AMP and then transferred to the acceptor end of tRNA(Pro). This chain is Proline--tRNA ligase, found in Brucella abortus (strain S19).